Here is a 101-residue protein sequence, read N- to C-terminus: Small ribosomal subunit protein uS14 (101 aa).

Belongs to the universal ribosomal protein uS14 family. As to quaternary structure, part of the 30S ribosomal subunit. Contacts proteins S3 and S10.

In terms of biological role, binds 16S rRNA, required for the assembly of 30S particles and may also be responsible for determining the conformation of the 16S rRNA at the A site. The polypeptide is Small ribosomal subunit protein uS14 (Buchnera aphidicola subsp. Acyrthosiphon pisum (strain APS) (Acyrthosiphon pisum symbiotic bacterium)).